Here is a 775-residue protein sequence, read N- to C-terminus: Ankyrin repeat and EF-hand domain-containing protein 1 (775 aa).

8 ANK repeats span residues 47-76, 184-213, 217-246, 250-279, 524-553, 557-586, 590-619, and 623-652; these read DGLS…HPDV, TGRT…EVNA, DRHH…DMGL, DGNT…DLKW, TYKT…NVNA, FLWT…SIDA, NNST…KFQI, and KGHA…NLPK.

The sequence is that of Ankyrin repeat and EF-hand domain-containing protein 1 (Ankef1) from Mus musculus (Mouse).